A 119-amino-acid chain; its full sequence is Small ribosomal subunit protein uS13 (119 aa).

The segment at 92–119 (RRGLPVRGQQTQTNARTRKGPRRGPASR) is disordered.

Belongs to the universal ribosomal protein uS13 family. Part of the 30S ribosomal subunit. Forms a loose heterodimer with protein S19. Forms two bridges to the 50S subunit in the 70S ribosome.

Located at the top of the head of the 30S subunit, it contacts several helices of the 16S rRNA. In the 70S ribosome it contacts the 23S rRNA (bridge B1a) and protein L5 of the 50S subunit (bridge B1b), connecting the 2 subunits; these bridges are implicated in subunit movement. Contacts the tRNAs in the A and P-sites. This chain is Small ribosomal subunit protein uS13, found in Halorhodospira halophila (strain DSM 244 / SL1) (Ectothiorhodospira halophila (strain DSM 244 / SL1)).